We begin with the raw amino-acid sequence, 460 residues long: Chromosomal replication initiator protein DnaA (460 aa).

A domain I, interacts with DnaA modulators region spans residues 1 to 73; the sequence is MEISIDSLWS…ANVVQSILGH (73 aa). Residues 73 to 116 form a domain II region; it reads HPVEIYITVAKGEEFEEIGGGGAWELPTTNSIYETPNQNRQPNT. The tract at residues 117–333 is domain III, AAA+ region; that stretch reads ELNAKYVFSR…GALTRALAYI (217 aa). 4 residues coordinate ATP: glycine 161, glycine 163, lysine 164, and threonine 165. The interval 334 to 460 is domain IV, binds dsDNA; that stretch reads SIWGLPMTVA…MNSRSRKPSL (127 aa).

This sequence belongs to the DnaA family. Oligomerizes as a right-handed, spiral filament on DNA at oriC.

It is found in the cytoplasm. Its function is as follows. Plays an essential role in the initiation and regulation of chromosomal replication. ATP-DnaA binds to the origin of replication (oriC) to initiate formation of the DNA replication initiation complex once per cell cycle. Binds the DnaA box (a 9 base pair repeat at the origin) and separates the double-stranded (ds)DNA. Forms a right-handed helical filament on oriC DNA; dsDNA binds to the exterior of the filament while single-stranded (ss)DNA is stabiized in the filament's interior. The ATP-DnaA-oriC complex binds and stabilizes one strand of the AT-rich DNA unwinding element (DUE), permitting loading of DNA polymerase. After initiation quickly degrades to an ADP-DnaA complex that is not apt for DNA replication. Binds acidic phospholipids. In Trichormus variabilis (strain ATCC 29413 / PCC 7937) (Anabaena variabilis), this protein is Chromosomal replication initiator protein DnaA.